A 108-amino-acid chain; its full sequence is Large ribosomal subunit protein eL33A (108 aa).

It belongs to the eukaryotic ribosomal protein eL33 family. As to quaternary structure, component of the large ribosomal subunit (LSU). Mature yeast ribosomes consist of a small (40S) and a large (60S) subunit. The 40S small subunit contains 1 molecule of ribosomal RNA (18S rRNA) and at least 33 different proteins. The large 60S subunit contains 3 rRNA molecules (25S, 5.8S and 5S rRNA) and at least 46 different proteins.

It is found in the cytoplasm. The protein localises to the nucleus. The protein resides in the nucleolus. Functionally, component of the ribosome, a large ribonucleoprotein complex responsible for the synthesis of proteins in the cell. The small ribosomal subunit (SSU) binds messenger RNAs (mRNAs) and translates the encoded message by selecting cognate aminoacyl-transfer RNA (tRNA) molecules. The large subunit (LSU) contains the ribosomal catalytic site termed the peptidyl transferase center (PTC), which catalyzes the formation of peptide bonds, thereby polymerizing the amino acids delivered by tRNAs into a polypeptide chain. The nascent polypeptides leave the ribosome through a tunnel in the LSU and interact with protein factors that function in enzymatic processing, targeting, and the membrane insertion of nascent chains at the exit of the ribosomal tunnel. The protein is Large ribosomal subunit protein eL33A (rpl35b) of Schizosaccharomyces pombe (strain 972 / ATCC 24843) (Fission yeast).